Reading from the N-terminus, the 333-residue chain is Autoinducer 2 import system permease protein LsrC (333 aa).

9 helical membrane-spanning segments follow: residues L14 to L34, L39 to L59, I70 to V90, L93 to L113, I115 to L135, L157 to L177, I206 to A226, G252 to L272, and L284 to D304.

Belongs to the binding-protein-dependent transport system permease family. AraH/RbsC subfamily. The complex is composed of two ATP-binding proteins (LsrA), two transmembrane proteins (LsrC and LsrD) and a solute-binding protein (LsrB).

The protein localises to the cell inner membrane. Its function is as follows. Part of the ABC transporter complex LsrABCD involved in autoinducer 2 (AI-2) import. Probably responsible for the translocation of the substrate across the membrane. In Photorhabdus laumondii subsp. laumondii (strain DSM 15139 / CIP 105565 / TT01) (Photorhabdus luminescens subsp. laumondii), this protein is Autoinducer 2 import system permease protein LsrC (lsrC).